We begin with the raw amino-acid sequence, 426 residues long: Serine--tRNA ligase (426 aa).

231 to 233 (TSE) is a binding site for L-serine. Residue 262-264 (RSE) coordinates ATP. Position 285 (Glu285) interacts with L-serine. 349 to 352 (EISS) contributes to the ATP binding site. Residue Ser385 participates in L-serine binding.

The protein belongs to the class-II aminoacyl-tRNA synthetase family. Type-1 seryl-tRNA synthetase subfamily. As to quaternary structure, homodimer. The tRNA molecule binds across the dimer.

It localises to the cytoplasm. The catalysed reaction is tRNA(Ser) + L-serine + ATP = L-seryl-tRNA(Ser) + AMP + diphosphate + H(+). It carries out the reaction tRNA(Sec) + L-serine + ATP = L-seryl-tRNA(Sec) + AMP + diphosphate + H(+). It participates in aminoacyl-tRNA biosynthesis; selenocysteinyl-tRNA(Sec) biosynthesis; L-seryl-tRNA(Sec) from L-serine and tRNA(Sec): step 1/1. Its function is as follows. Catalyzes the attachment of serine to tRNA(Ser). Is also able to aminoacylate tRNA(Sec) with serine, to form the misacylated tRNA L-seryl-tRNA(Sec), which will be further converted into selenocysteinyl-tRNA(Sec). The polypeptide is Serine--tRNA ligase (Legionella pneumophila (strain Paris)).